A 1046-amino-acid chain; its full sequence is Translation initiation factor IF-2 (1046 aa).

The interval 49 to 448 (EAFPAEGSAP…MGAMVPRGNG (400 aa)) is disordered. A compositionally biased stretch (low complexity) spans 52 to 71 (PAEGSAPSSRPGGRPGNGAR). Positions 94-111 (RPGPGGRPVPGRPGPAPL) are enriched in pro residues. Low complexity-rich tracts occupy residues 112–139 (PGAS…SQPV) and 147–159 (PRPA…AAAP). A compositionally biased stretch (pro residues) spans 160 to 176 (APAPSAPAPAPSAPAPA). Residues 177-187 (PITSAPTAATP) are compositionally biased toward low complexity. Over residues 188–206 (PAAPQRPTPGGPRPGPAAP) the composition is skewed to pro residues. The segment covering 210-222 (RTGGPGGPGGPGG) has biased composition (gly residues). The span at 223 to 235 (GPRPGPRPGPRPA) shows a compositional bias: pro residues. The segment covering 244–253 (SPAAGPRAAS) has biased composition (low complexity). Composition is skewed to pro residues over residues 260–281 (SAPP…PRPG) and 304–314 (RPTPGQMPPRP). Over residues 320 to 333 (PRPNSNMFQPRPAG) the composition is skewed to low complexity. The segment covering 334–414 (GAPGRPGGGG…AGAFGPGGRG (81 aa)) has biased composition (gly residues). A compositionally biased stretch (basic residues) spans 415 to 426 (RPGRQRKSKRAK). In terms of domain architecture, tr-type G spans 539–711 (ARPPVVTVMG…VILTADASLD (173 aa)). A G1 region spans residues 548-555 (GHVDHGKT). Position 548–555 (548–555 (GHVDHGKT)) interacts with GTP. The tract at residues 573–577 (GITQH) is G2. A G3 region spans residues 598 to 601 (DTPG). Residues 598–602 (DTPGH) and 652–655 (NKVD) each bind GTP. The G4 stretch occupies residues 652–655 (NKVD). Positions 688–690 (SAR) are G5.

It belongs to the TRAFAC class translation factor GTPase superfamily. Classic translation factor GTPase family. IF-2 subfamily.

The protein localises to the cytoplasm. Its function is as follows. One of the essential components for the initiation of protein synthesis. Protects formylmethionyl-tRNA from spontaneous hydrolysis and promotes its binding to the 30S ribosomal subunits. Also involved in the hydrolysis of GTP during the formation of the 70S ribosomal complex. In Parafrankia sp. (strain EAN1pec), this protein is Translation initiation factor IF-2.